The following is a 420-amino-acid chain: MVSRQEQFEQVQAVKKSINTASEEVKNQALLAMADHLVAATEEILAANALDMAAAKGKISDVMLDRLYLDADRIEAMARGIREVVALPDPIGEVLETSQLENGLVITKKRVAMGVIGIIYESRPNVTSDAAALTLKSGNAVVLRSGKDAYQTTHAIVTALKKGLETTTIHPNVIQLVEDTSHESSYAMMKAKGYLDLLIPRGGAGLINAVVENAIVPVIETGTGIVHVYVDKDADEDKALSIINNAKTSRPSVCNAMEVLLVHEDKAASILPRLDQMLVAERKEAGLEPIQFRLDSKASQFVSGQAAETQDFDTEFLDYVLAVKVVSSLEEAVAHIESHSTHHSDAIVTENAEAAAYFTDQVDSAAVYVNASTRFTDGGQFGLGCEMGISTQKLHARGPMGLKELTSYKYVVTGDGQIRE.

The protein belongs to the gamma-glutamyl phosphate reductase family.

It localises to the cytoplasm. It catalyses the reaction L-glutamate 5-semialdehyde + phosphate + NADP(+) = L-glutamyl 5-phosphate + NADPH + H(+). The protein operates within amino-acid biosynthesis; L-proline biosynthesis; L-glutamate 5-semialdehyde from L-glutamate: step 2/2. Catalyzes the NADPH-dependent reduction of L-glutamate 5-phosphate into L-glutamate 5-semialdehyde and phosphate. The product spontaneously undergoes cyclization to form 1-pyrroline-5-carboxylate. In Streptococcus pneumoniae (strain Hungary19A-6), this protein is Gamma-glutamyl phosphate reductase.